The primary structure comprises 212 residues: Interleukin-6 (212 aa).

The N-terminal stretch at 1 to 29 (MNSFSTSAFGPVAFSLGLLLVLPAAFPAP) is a signal peptide. An intrachain disulfide couples Cys72 to Cys78. N-linked (GlcNAc...) asparagine glycosylation occurs at Asn73. Phosphoserine; by FAM20C is present on Ser81. Cys101 and Cys111 are disulfide-bonded.

This sequence belongs to the IL-6 superfamily. Component of a hexamer of two molecules each of IL6, IL6R and IL6ST; first binds to IL6R to associate with the signaling subunit IL6ST. Interacts with IL6R (via the N-terminal ectodomain); this interaction may be affected by IL6R-binding with SORL1, hence decreasing IL6 cis signaling. Interacts with SORL1 (via the N-terminal ectodomain); this interaction leads to IL6 internalization and lysosomal degradation. May form a trimeric complex with the soluble SORL1 ectodomain and soluble IL6R receptor; this interaction might stabilize circulating IL6, hence promoting IL6 trans signaling. Post-translationally, N- and O-glycosylated. In terms of tissue distribution, produced by skeletal muscle.

The protein resides in the secreted. In terms of biological role, cytokine with a wide variety of biological functions in immunity, tissue regeneration, and metabolism. Binds to IL6R, then the complex associates to the signaling subunit IL6ST/gp130 to trigger the intracellular IL6-signaling pathway. The interaction with the membrane-bound IL6R and IL6ST stimulates 'classic signaling', whereas the binding of IL6 and soluble IL6R to IL6ST stimulates 'trans-signaling'. Alternatively, 'cluster signaling' occurs when membrane-bound IL6:IL6R complexes on transmitter cells activate IL6ST receptors on neighboring receiver cells. Functionally, IL6 is a potent inducer of the acute phase response. Rapid production of IL6 contributes to host defense during infection and tissue injury, but excessive IL6 synthesis is involved in disease pathology. In the innate immune response, is synthesized by myeloid cells, such as macrophages and dendritic cells, upon recognition of pathogens through toll-like receptors (TLRs) at the site of infection or tissue injury. In the adaptive immune response, is required for the differentiation of B cells into immunoglobulin-secreting cells. Plays a major role in the differentiation of CD4(+) T cell subsets. Essential factor for the development of T follicular helper (Tfh) cells that are required for the induction of germinal-center formation. Required to drive naive CD4(+) T cells to the Th17 lineage. Also required for proliferation of myeloma cells and the survival of plasmablast cells. Acts as an essential factor in bone homeostasis and on vessels directly or indirectly by induction of VEGF, resulting in increased angiogenesis activity and vascular permeability. Induces, through 'trans-signaling' and synergistically with IL1B and TNF, the production of VEGF. Involved in metabolic controls, is discharged into the bloodstream after muscle contraction increasing lipolysis and improving insulin resistance. 'Trans-signaling' in central nervous system also regulates energy and glucose homeostasis. Mediates, through GLP-1, crosstalk between insulin-sensitive tissues, intestinal L cells and pancreatic islets to adapt to changes in insulin demand. Also acts as a myokine. Plays a protective role during liver injury, being required for maintenance of tissue regeneration. Also has a pivotal role in iron metabolism by regulating HAMP/hepcidin expression upon inflammation or bacterial infection. Through activation of IL6ST-YAP-NOTCH pathway, induces inflammation-induced epithelial regeneration. The sequence is that of Interleukin-6 from Homo sapiens (Human).